Here is a 485-residue protein sequence, read N- to C-terminus: Aspartyl/glutamyl-tRNA(Asn/Gln) amidotransferase subunit B (485 aa).

It belongs to the GatB/GatE family. GatB subfamily. Heterotrimer of A, B and C subunits.

The enzyme catalyses L-glutamyl-tRNA(Gln) + L-glutamine + ATP + H2O = L-glutaminyl-tRNA(Gln) + L-glutamate + ADP + phosphate + H(+). It catalyses the reaction L-aspartyl-tRNA(Asn) + L-glutamine + ATP + H2O = L-asparaginyl-tRNA(Asn) + L-glutamate + ADP + phosphate + 2 H(+). Its function is as follows. Allows the formation of correctly charged Asn-tRNA(Asn) or Gln-tRNA(Gln) through the transamidation of misacylated Asp-tRNA(Asn) or Glu-tRNA(Gln) in organisms which lack either or both of asparaginyl-tRNA or glutaminyl-tRNA synthetases. The reaction takes place in the presence of glutamine and ATP through an activated phospho-Asp-tRNA(Asn) or phospho-Glu-tRNA(Gln). The protein is Aspartyl/glutamyl-tRNA(Asn/Gln) amidotransferase subunit B of Borrelia recurrentis (strain A1).